A 320-amino-acid chain; its full sequence is Zona pellucida-binding protein 1 (320 aa).

2 N-linked (GlcNAc...) asparagine glycosylation sites follow: N85 and N158.

The protein belongs to the zona pellucida-binding protein Sp38 family.

Its subcellular location is the cytoplasmic vesicle. The protein localises to the secretory vesicle. It is found in the acrosome. The protein resides in the secreted. It localises to the acrosome membrane. Plays a role in sperm morphogenesis and in sperm-oocyte interaction during fertilization. In Gallus gallus (Chicken), this protein is Zona pellucida-binding protein 1 (ZPBP1).